A 185-amino-acid polypeptide reads, in one-letter code: NEDD8-conjugating enzyme UBE2F (185 aa).

The tract at residues 1 to 29 (MLTLASKLKRDDGVKGSRTSSTTSDSTRR) is disordered. The interaction with uba3 stretch occupies residues 1–29 (MLTLASKLKRDDGVKGSRTSSTTSDSTRR). Residues 32–185 (VRDRLLVKEV…VEDYIKRYAR (154 aa)) enclose the UBC core domain. Cys116 (glycyl thioester intermediate) is an active-site residue.

It belongs to the ubiquitin-conjugating enzyme family. UBE2F subfamily.

The catalysed reaction is [E1 NEDD8-activating enzyme]-S-[NEDD8 protein]-yl-L-cysteine + [E2 NEDD8-conjugating enzyme]-L-cysteine = [E1 NEDD8-activating enzyme]-L-cysteine + [E2 NEDD8-conjugating enzyme]-S-[NEDD8-protein]-yl-L-cysteine.. The protein operates within protein modification; protein neddylation. Its function is as follows. Accepts the ubiquitin-like protein NEDD8 from the UBA3-NAE1 E1 complex and catalyzes its covalent attachment to other proteins. Together with the E3 ubiquitin ligase rnf7/rbx2, specifically neddylates cullin-5 (cul5). Does not neddylate cul1, cul2, cul3, cul4a or cul4b. The chain is NEDD8-conjugating enzyme UBE2F (ube2f) from Xenopus tropicalis (Western clawed frog).